Reading from the N-terminus, the 470-residue chain is Isocitrate dehydrogenase (NAD(+)), mitochondrial (470 aa).

The transit peptide at 1–26 (MTRVERGRVLARAIERAVAHRASARR) directs the protein to the mitochondrion. NAD(+)-binding positions include 138-140 (TVT) and N159. D-threo-isocitrate contacts are provided by residues 157–163 (SPNGAMR), R193, Y200, K275, and D319. D319 contacts Mg(2+). Residue K324 coordinates NAD(+). A D-threo-isocitrate-binding site is contributed by D343. The Mg(2+) site is built by D343 and D347. Residues 380–385 (HGTVAD) and N399 each bind NAD(+).

Belongs to the isocitrate and isopropylmalate dehydrogenases family. In terms of assembly, forms homodimers. Mg(2+) is required as a cofactor. Mn(2+) serves as cofactor.

Its subcellular location is the mitochondrion. The catalysed reaction is D-threo-isocitrate + NAD(+) = 2-oxoglutarate + CO2 + NADH. The homodimer exhibits allosteric regulation by isocitrate. Performs an essential role in the oxidative function of the tricarboxylic acid cycle and respiration. Catalyzes the decarboxylation of isocitrate to produce 2-oxoglutarate and generate NADH to provide electrons for energy production. The protein is Isocitrate dehydrogenase (NAD(+)), mitochondrial of Ostreococcus tauri.